An 81-amino-acid polypeptide reads, in one-letter code: uncharacterized protein (81 aa).

2 consecutive transmembrane segments (helical) span residues 1 to 21 (MTLF…FSLL) and 27 to 47 (IFIY…HHFF).

It localises to the membrane. This is an uncharacterized protein from Saccharomyces cerevisiae (strain ATCC 204508 / S288c) (Baker's yeast).